The primary structure comprises 170 residues: Lipoprotein signal peptidase (170 aa).

Transmembrane regions (helical) follow at residues 71–91 and 97–116; these read YFFIGIAVVVSIFLIKLILEN and AIAYSLILGGAMGNLIDRVF. Active-site residues include Asp-122 and Asp-140. A helical transmembrane segment spans residues 131 to 151; that stretch reads WHWPAFNLADIAIVLGALLFV.

This sequence belongs to the peptidase A8 family.

It is found in the cell inner membrane. It catalyses the reaction Release of signal peptides from bacterial membrane prolipoproteins. Hydrolyzes -Xaa-Yaa-Zaa-|-(S,diacylglyceryl)Cys-, in which Xaa is hydrophobic (preferably Leu), and Yaa (Ala or Ser) and Zaa (Gly or Ala) have small, neutral side chains.. It functions in the pathway protein modification; lipoprotein biosynthesis (signal peptide cleavage). In terms of biological role, this protein specifically catalyzes the removal of signal peptides from prolipoproteins. The protein is Lipoprotein signal peptidase of Serratia marcescens.